Here is a 433-residue protein sequence, read N- to C-terminus: Adenosylhomocysteinase B (433 aa).

Residues T57, D132, E157, K187, and D191 each contribute to the substrate site. The tract at residues S184–A351 is NAD binding.

The protein belongs to the adenosylhomocysteinase family. Homotetramer. Requires NAD(+) as cofactor.

The protein localises to the cytoplasm. The enzyme catalyses S-adenosyl-L-homocysteine + H2O = L-homocysteine + adenosine. Its pathway is amino-acid biosynthesis; L-homocysteine biosynthesis; L-homocysteine from S-adenosyl-L-homocysteine: step 1/1. In terms of biological role, catalyzes the hydrolysis of S-adenosyl-L-homocysteine to form adenosine and homocysteine. Binds copper ions. The polypeptide is Adenosylhomocysteinase B (ahcy-b) (Xenopus laevis (African clawed frog)).